A 764-amino-acid polypeptide reads, in one-letter code: Thyrotropin receptor (764 aa).

The first 21 residues, 1–21, serve as a signal peptide directing secretion; the sequence is MSLTPLLQLALLLALPRSLRG. Residues 22 to 413 lie on the Extracellular side of the membrane; it reads KGCPSPPCEC…EFNPCEDIMG (392 aa). Cysteine 31 and cysteine 41 are disulfide-bonded. Asparagine 77 and asparagine 99 each carry an N-linked (GlcNAc...) asparagine glycan. 6 LRR repeats span residues 125 to 150, 151 to 174, 176 to 199, 201 to 223, 225 to 248, and 250 to 271; these read LPLL…VYST, DVFF…AFQG, CNET…AFNG, KLDA…AFGG, FSGP…GLEH, and KELI…SFLH. 2 N-linked (GlcNAc...) asparagine glycosylation sites follow: asparagine 177 and asparagine 198. Residue asparagine 302 is glycosylated (N-linked (GlcNAc...) asparagine). The residue at position 385 (tyrosine 385) is a Sulfotyrosine. A helical membrane pass occupies residues 414–441; it reads YRFLRIVVWFVSLLALLGNVFVLVILLT. The Cytoplasmic segment spans residues 442-450; that stretch reads SHYKLTVPR. The helical transmembrane segment at 451–473 threads the bilayer; that stretch reads FLMCNLAFADFCMGMYLLLIASV. The Extracellular portion of the chain corresponds to 474-494; that stretch reads DLYTQSEYYNHAIDWQTGPGC. Cysteine 494 and cysteine 569 are joined by a disulfide. Residues 495–517 traverse the membrane as a helical segment; sequence NTAGFFTVFASELSVYTLTVITL. Residues 518–537 lie on the Cytoplasmic side of the membrane; it reads ERWYAITFAMRLDRKIRLRH. A helical membrane pass occupies residues 538–560; the sequence is AYAIMAGGWVCCFLLALLPLVGI. Topologically, residues 561 to 580 are extracellular; sequence SSYAKVSICLPMDTETPLAL. Residues 581-602 form a helical membrane-spanning segment; the sequence is AYIILVLLLNIVAFTIVCSCYV. Residues 603-625 lie on the Cytoplasmic side of the membrane; the sequence is KIYITVRNPQYNPGDKDTKIAKR. A helical membrane pass occupies residues 626-649; sequence MAVLIFTDFMCMAPISFYALSALM. Topologically, residues 650–660 are extracellular; the sequence is NKPLITVTNSK. A helical transmembrane segment spans residues 661–682; it reads ILLVLFYPLNSCANPFLYAIFT. Over 683 to 764 the chain is Cytoplasmic; that stretch reads KAFQRDVFIL…ISKEYKQPVL (82 aa). Positions 762–764 match the PDZ-binding motif; it reads PVL.

It belongs to the G-protein coupled receptor 1 family. FSH/LSH/TSH subfamily. Interacts with heterodimer GPHA2:GPHB5; this interaction stimulates cAMP production. Interacts (via the PDZ-binding motif) with SCRIB; regulates TSHR trafficking and function. In terms of processing, glycosylated. Post-translationally, sulfated. Sulfation on Tyr-385 plays a role in thyrotropin receptor binding and activation. As to expression, expressed in thyroide cells (at protein level).

The protein resides in the cell membrane. The protein localises to the basolateral cell membrane. Its function is as follows. Receptor for the thyroid-stimulating hormone (TSH) or thyrotropin. Also acts as a receptor for the heterodimeric glycoprotein hormone (GPHA2:GPHB5) or thyrostimulin. The activity of this receptor is mediated by G proteins which activate adenylate cyclase. Plays a central role in controlling thyroid cell metabolism. In Sus scrofa (Pig), this protein is Thyrotropin receptor (TSHR).